The following is a 289-amino-acid chain: Phosphatidylglycerol--prolipoprotein diacylglyceryl transferase (289 aa).

Transmembrane regions (helical) follow at residues 24–44 (GIAI…VYLL), 70–90 (GGVL…DWFL), and 111–131 (GING…LWLF). Arginine 158 provides a ligand contact to a 1,2-diacyl-sn-glycero-3-phospho-(1'-sn-glycerol). Helical transmembrane passes span 219–239 (GYLS…IEFF) and 253–273 (FSMG…ILVW).

The protein belongs to the Lgt family.

It is found in the cell inner membrane. It catalyses the reaction L-cysteinyl-[prolipoprotein] + a 1,2-diacyl-sn-glycero-3-phospho-(1'-sn-glycerol) = an S-1,2-diacyl-sn-glyceryl-L-cysteinyl-[prolipoprotein] + sn-glycerol 1-phosphate + H(+). It participates in protein modification; lipoprotein biosynthesis (diacylglyceryl transfer). Functionally, catalyzes the transfer of the diacylglyceryl group from phosphatidylglycerol to the sulfhydryl group of the N-terminal cysteine of a prolipoprotein, the first step in the formation of mature lipoproteins. This is Phosphatidylglycerol--prolipoprotein diacylglyceryl transferase from Chlorobaculum tepidum (strain ATCC 49652 / DSM 12025 / NBRC 103806 / TLS) (Chlorobium tepidum).